The sequence spans 75 residues: MSKSTFLFVYIILILGSMVNEIQGQHAMCHEILPETDCGAGSCTALCLQLWRGTGKCVRTNDQKLICLCNFECIV.

The first 24 residues, 1–24, serve as a signal peptide directing secretion; the sequence is MSKSTFLFVYIILILGSMVNEIQG. 4 disulfides stabilise this stretch: Cys-29/Cys-73, Cys-38/Cys-57, Cys-43/Cys-67, and Cys-47/Cys-69.

The protein belongs to the DEFL family.

The protein resides in the secreted. In Arabidopsis thaliana (Mouse-ear cress), this protein is Putative defensin-like protein 126 (LCR6).